Here is a 349-residue protein sequence, read N- to C-terminus: 5-deoxyribose 1-phosphate isomerase (349 aa).

Residues 49–51, R92, and Q199 each bind substrate; that span reads RGA. Catalysis depends on D240, which acts as the Proton donor. 250–251 contributes to the substrate binding site; it reads NK.

Belongs to the EIF-2B alpha/beta/delta subunits family. DrdI subfamily.

The catalysed reaction is 5-deoxy-alpha-D-ribose 1-phosphate = 5-deoxy-D-ribulose 1-phosphate. It functions in the pathway carbohydrate degradation. Functionally, catalyzes the isomerization of 5-deoxy-alpha-D-ribose 1-phosphate to 5-deoxy-D-ribulose 1-phosphate, as part of a 5-deoxyribose salvage pathway that recycles this toxic radical SAM enzyme by-product to mainstream metabolites. This chain is 5-deoxyribose 1-phosphate isomerase, found in Clostridium botulinum (strain Okra / Type B1).